We begin with the raw amino-acid sequence, 203 residues long: N-(5'-phosphoribosyl)anthranilate isomerase (203 aa).

The protein belongs to the TrpF family.

It catalyses the reaction N-(5-phospho-beta-D-ribosyl)anthranilate = 1-(2-carboxyphenylamino)-1-deoxy-D-ribulose 5-phosphate. The protein operates within amino-acid biosynthesis; L-tryptophan biosynthesis; L-tryptophan from chorismate: step 3/5. This Listeria innocua serovar 6a (strain ATCC BAA-680 / CLIP 11262) protein is N-(5'-phosphoribosyl)anthranilate isomerase.